Reading from the N-terminus, the 364-residue chain is Lysophosphatidic acid receptor 1 (364 aa).

Residues 1–50 (MAAISTSIPVISQPQFTAMNEPQCFYNESIAFFYNRSGKHLATEWNTVSK) lie on the Extracellular side of the membrane. 2 disulfides stabilise this stretch: Cys-24/Cys-190 and Cys-188/Cys-195. N-linked (GlcNAc...) asparagine glycans are attached at residues Asn-27 and Asn-35. Lys-39 is an a 1-acyl-sn-glycero-3-phosphate binding site. The chain crosses the membrane as a helical span at residues 51-75 (LVMGLGITVCIFIMLANLLVMVAIY). The Cytoplasmic portion of the chain corresponds to 76–83 (VNRRFHFP). A helical transmembrane segment spans residues 84–107 (IYYLMANLAAADFFAGLAYFYLMF). Residues 108–121 (NTGPNTRRLTVSTW) are Extracellular-facing. A helical membrane pass occupies residues 122–144 (LLRQGLIDTSLTASVANLLAIAI). 124-129 (RQGLID) is a binding site for a 1-acyl-sn-glycero-3-phosphate. Residues 145-163 (ERHITVFRMQLHTRMSNRR) are Cytoplasmic-facing. A helical membrane pass occupies residues 164 to 184 (VVVVIVVIWTMAIVMGAIPSV). Residues 185–204 (GWNCICDIENCSNMAPLYSD) lie on the Extracellular side of the membrane. A helical membrane pass occupies residues 205 to 225 (SYLVFWAIFNLVTFVVMVVLY). Trp-210 is an a 1-acyl-sn-glycero-3-phosphate binding site. The Cytoplasmic segment spans residues 226–255 (AHIFGYVRQRTMRMSRHSSGPRRNRDTMMS). A helical membrane pass occupies residues 256–280 (LLKTVVIVLGAFIICWTPGLVLLLL). The Extracellular segment spans residues 281-294 (DVCCPQCDVLAYEK). A disulfide bridge connects residues Cys-284 and Cys-287. A helical membrane pass occupies residues 295 to 315 (FFLLLAEFNSAMNPIIYSYRD). Over 316–364 (KEMSATFRQILCCQRSENPTGPTEGSDRSASSLNHTILAGVHSNDHSVV) the chain is Cytoplasmic. Phosphoserine is present on Ser-341. Thr-351 is modified (phosphothreonine).

It belongs to the G-protein coupled receptor 1 family. As to quaternary structure, interacts with RALA and GRK2. Interacts with GNAQ and GNA13. Interacts with CD14; the interaction is enhanced by exposure to bacterial lipopolysaccharide (LPS). Post-translationally, N-glycosylated. In terms of tissue distribution, expressed in many adult organs, including brain, heart, colon, small intestine, placenta, prostate, ovary, pancreas, testes, spleen, skeletal muscle, and kidney. Little or no expression in liver, lung, thymus, or peripheral blood leukocytes. Detected in lung fibroblasts from bronchoalveolar fluid from patients with idiopathic pulmonary fibrosis. Detected in bone marrow-derived mesenchymal stem cells.

The protein localises to the cell surface. Its subcellular location is the cell membrane. It localises to the endosome. Receptor for lysophosphatidic acid (LPA). Plays a role in the reorganization of the actin cytoskeleton, cell migration, differentiation and proliferation, and thereby contributes to the responses to tissue damage and infectious agents. Activates downstream signaling cascades via the G(i)/G(o), G(12)/G(13), and G(q) families of heteromeric G proteins. Signaling inhibits adenylyl cyclase activity and decreases cellular cAMP levels. Signaling triggers an increase of cytoplasmic Ca(2+) levels. Activates RALA; this leads to the activation of phospholipase C (PLC) and the formation of inositol 1,4,5-trisphosphate. Signaling mediates activation of down-stream MAP kinases. Contributes to the regulation of cell shape. Promotes Rho-dependent reorganization of the actin cytoskeleton in neuronal cells and neurite retraction. Promotes the activation of Rho and the formation of actin stress fibers. Promotes formation of lamellipodia at the leading edge of migrating cells via activation of RAC1. Through its function as LPA receptor, plays a role in chemotaxis and cell migration, including responses to injury and wounding. Plays a role in triggering inflammation in response to bacterial lipopolysaccharide (LPS) via its interaction with CD14. Promotes cell proliferation in response to LPA. Inhibits the intracellular ciliogenesis pathway in response to LPA and through AKT1 activation. Required for normal skeleton development. May play a role in osteoblast differentiation. Required for normal brain development. Required for normal proliferation, survival and maturation of newly formed neurons in the adult dentate gyrus. Plays a role in pain perception and in the initiation of neuropathic pain. The chain is Lysophosphatidic acid receptor 1 (LPAR1) from Homo sapiens (Human).